Reading from the N-terminus, the 695-residue chain is MTFLLVSLLAFLSLGSGCHHRICHCWHRVFLCQESKVTEIPSDLPRNAVELRFVLTKLRVIPKGAFSGFGDLEKIEISQNDVLEVIEANVFFNLSKLHEIRIEKANNLLYIDTDAFQNLPNLRYLLISNTGIKHFPAVHKIQSLQKVLLDIQDNINIHTVERNSFMGLSFESMILWLNKNGIQEIHNCAFNGTQLDELNLSDNINLEELPNDVFQGASGPVILDISRTRIHSLPSYGLENIKKLRAKSTYNLKKLPSLDKFVALMEASLTYPSHCCAFANWRRPISELHPICNKSILRQEVDDMTQARGQRVSLAEDEESSYTKGFDMMYSEFDYDLCNEVVDVTCSPKPDAFNPCEDIMGYDILRVLIWFISILAITGNIIVLMILITSQYKLTVPRFLMCNLAFADLCIGIYLLLIASVDIYTKSQYHNYAIDWQTGAGCDAAGFFTVFASELSVYTLTVITLERWHTITHAMQLECKVQLRHAAIIMLLGWIFAFMVALFPIFGISSYMKVSICLPMDIDSPLSQLYVMSLLVLNVLAFVVICCCYAHIYLTVRNPNIVSSSSDTKIAKRMAMLIFTDFLCMAPISFFAISASLKVPLITVSKSKILLVLFYPINSCANPFLYAIFTKNFRRDFFILLSKFGCYEVQAQTYRSETSSTAHNFHPRNGHCPPAPRVTNSSNYILIPLRHLAKN.

Positions 1-17 (MTFLLVSLLAFLSLGSG) are cleaved as a signal peptide. 2 cysteine pairs are disulfide-bonded: C18–C25 and C23–C32. Positions 18–46 (CHHRICHCWHRVFLCQESKVTEIPSDLPR) constitute an LRRNT domain. Topologically, residues 18–366 (CHHRICHCWH…EDIMGYDILR (349 aa)) are extracellular. LRR repeat units lie at residues 49–72 (VELR…FGDL), 73–97 (EKIE…LSKL), 98–118 (HEIR…AFQN), 119–143 (LPNL…KIQS), 144–169 (LQKV…MGLS), 170–192 (FESM…AFNG), 193–216 (TQLD…VFQG), 217–240 (ASGP…GLEN), and 241–259 (IKKL…PSLD). N-linked (GlcNAc...) asparagine glycosylation is present at N93. 2 N-linked (GlcNAc...) asparagine glycosylation sites follow: N191 and N199. 4 cysteine pairs are disulfide-bonded: C275/C346, C276/C292, C276/C356, and C292/C338. N-linked (GlcNAc...) asparagine glycosylation occurs at N293. Y335 carries the sulfotyrosine modification. A helical membrane pass occupies residues 367 to 387 (VLIWFISILAITGNIIVLMIL). Topologically, residues 388–398 (ITSQYKLTVPR) are cytoplasmic. A helical membrane pass occupies residues 399-419 (FLMCNLAFADLCIGIYLLLIA). The Extracellular portion of the chain corresponds to 420–444 (SVDIYTKSQYHNYAIDWQTGAGCDA). Residues 445–465 (AGFFTVFASELSVYTLTVITL) traverse the membrane as a helical segment. The Cytoplasmic portion of the chain corresponds to 466 to 487 (ERWHTITHAMQLECKVQLRHAA). A helical membrane pass occupies residues 488–508 (IIMLLGWIFAFMVALFPIFGI). At 509 to 528 (SSYMKVSICLPMDIDSPLSQ) the chain is on the extracellular side. A helical transmembrane segment spans residues 529-550 (LYVMSLLVLNVLAFVVICCCYA). At 551-573 (HIYLTVRNPNIVSSSSDTKIAKR) the chain is on the cytoplasmic side. A helical membrane pass occupies residues 574–594 (MAMLIFTDFLCMAPISFFAIS). Topologically, residues 595–608 (ASLKVPLITVSKSK) are extracellular. Residues 609-629 (ILLVLFYPINSCANPFLYAIF) traverse the membrane as a helical segment. At 630-695 (TKNFRRDFFI…LIPLRHLAKN (66 aa)) the chain is on the cytoplasmic side.

Belongs to the G-protein coupled receptor 1 family. FSH/LSH/TSH subfamily. Homotrimer. Functions as a homotrimer binding the FSH hormone heterodimer composed of CGA and FSHB. Interacts with ARRB2. Interacts with APPL2; interaction is independent of follicle stimulating hormone stimulation. N-glycosylated; indirectly required for FSH-binding, possibly via a conformational change that allows high affinity binding of hormone. In terms of processing, sulfated.

It is found in the cell membrane. Functionally, g protein-coupled receptor for follitropin, the follicle-stimulating hormone. Through cAMP production activates the downstream PI3K-AKT and ERK1/ERK2 signaling pathways. This is Follicle-stimulating hormone receptor (FSHR) from Felis catus (Cat).